The sequence spans 435 residues: UPF0761 membrane protein mma_2179 (435 aa).

6 helical membrane passes run 45 to 65, 103 to 123, 142 to 162, 177 to 197, 208 to 228, and 252 to 272; these read VLALVPILTIALAIFTTFPLF, LSAFGAVALIVTAVAMMLMID, ILVYWAIVTLGPLLIGASMTF, VPFVGAVFYTSISILLSMVAF, LVEWRDAVVGGLLAAIAFEIV, and FPIFLVWVYLGWLITLAGAVV.

It belongs to the UPF0761 family.

It localises to the cell inner membrane. The polypeptide is UPF0761 membrane protein mma_2179 (Janthinobacterium sp. (strain Marseille) (Minibacterium massiliensis)).